We begin with the raw amino-acid sequence, 151 residues long: Multiprotein-bridging factor 1 (151 aa).

2 disordered regions span residues 1–29 (MSDWDTNTIIGSRARAGGSGPRANVARSQ) and 78–98 (DPNVGRAISRARTDKKMSQKD). An essential for TBP-binding region spans residues 41–119 (VVSVDKKYGS…VNDYEAARAI (79 aa)). The HTH cro/C1-type domain occupies 85-139 (ISRARTDKKMSQKDLATKINEKPTVVNDYEAARAIPNQQVLSKLERALGVKLRGN). Basic and acidic residues predominate over residues 88–98 (ARTDKKMSQKD). A DNA-binding region (H-T-H motif) is located at residues 96 to 115 (QKDLATKINEKPTVVNDYEA). A Phosphoserine modification is found at Ser143.

It belongs to the MBF1 family. In terms of assembly, interacts with TBP and the transcription factor GCN4. Interacts with RPS3/us3.

Its subcellular location is the cytoplasm. The protein resides in the nucleus. Its function is as follows. Transcriptional coactivator that stimulates GCN4-dependent transcriptional activity by bridging the DNA-binding region of GCN4 and TBP (SPT15), thereby recruiting TBP to GCN4-bound promoters. Involved in induction of the ribosome quality control (RQC) pathway; a pathway that degrades nascent peptide chains during problematic translation. Required to prevent stalled ribosomes from frameshifting. The sequence is that of Multiprotein-bridging factor 1 (MBF1) from Saccharomyces cerevisiae (strain ATCC 204508 / S288c) (Baker's yeast).